The primary structure comprises 236 residues: Purine nucleoside phosphorylase DeoD-type 2 (236 aa).

Histidine 5 lines the a purine D-ribonucleoside pocket. Phosphate is bound by residues glycine 21, arginine 25, arginine 44, and 88–91 (RVGS). A purine D-ribonucleoside-binding positions include 180-182 (DME) and 204-205 (SD). Aspartate 205 (proton donor) is an active-site residue.

This sequence belongs to the PNP/UDP phosphorylase family. Homohexamer; trimer of homodimers.

The enzyme catalyses a purine D-ribonucleoside + phosphate = a purine nucleobase + alpha-D-ribose 1-phosphate. The catalysed reaction is a purine 2'-deoxy-D-ribonucleoside + phosphate = a purine nucleobase + 2-deoxy-alpha-D-ribose 1-phosphate. In terms of biological role, catalyzes the reversible phosphorolytic breakdown of the N-glycosidic bond in the beta-(deoxy)ribonucleoside molecules, with the formation of the corresponding free purine bases and pentose-1-phosphate. This chain is Purine nucleoside phosphorylase DeoD-type 2, found in Photobacterium profundum (strain SS9).